The primary structure comprises 935 residues: C-1-tetrahydrofolate synthase, cytoplasmic (935 aa).

Met-1 carries the N-acetylmethionine modification. A methylenetetrahydrofolate dehydrogenase and methenyltetrahydrofolate cyclohydrolase (D/C) domain region spans residues 2–291 (APAEILNGRE…MLMQSTVESA (290 aa)). Substrate-binding positions include 52–56 (YINVK) and 99–101 (VQL). Lys-56 is an active-site residue. Residues 172 to 174 (GRS) and Ser-197 each bind NADP(+). Residue 272-276 (PGGVG) coordinates substrate. Residues 310–935 (LNLKTPDPSD…PETQQVNGLF (626 aa)) are formyltetrahydrofolate synthetase domain. Ser-318 is subject to Phosphoserine. An ATP-binding site is contributed by 380–387 (TPLGEGKS). Phosphoserine is present on residues Ser-413 and Ser-490.

The protein in the N-terminal section; belongs to the tetrahydrofolate dehydrogenase/cyclohydrolase family. This sequence in the C-terminal section; belongs to the formate--tetrahydrofolate ligase family. In terms of assembly, homodimer.

The protein resides in the cytoplasm. It catalyses the reaction (6R)-5,10-methylene-5,6,7,8-tetrahydrofolate + NADP(+) = (6R)-5,10-methenyltetrahydrofolate + NADPH. The catalysed reaction is (6R)-5,10-methenyltetrahydrofolate + H2O = (6R)-10-formyltetrahydrofolate + H(+). It carries out the reaction (6S)-5,6,7,8-tetrahydrofolate + formate + ATP = (6R)-10-formyltetrahydrofolate + ADP + phosphate. Its pathway is one-carbon metabolism; tetrahydrofolate interconversion. Functionally, trifunctional enzyme that catalyzes the interconversion of three forms of one-carbon-substituted tetrahydrofolate: (6R)-5,10-methylene-5,6,7,8-tetrahydrofolate, 5,10-methenyltetrahydrofolate and (6S)-10-formyltetrahydrofolate. These derivatives of tetrahydrofolate are differentially required in nucleotide and amino acid biosynthesis, (6S)-10-formyltetrahydrofolate being required for purine biosynthesis while (6R)-5,10-methylene-5,6,7,8-tetrahydrofolate is used for serine and methionine biosynthesis for instance. The chain is C-1-tetrahydrofolate synthase, cytoplasmic (MTHFD1) from Pongo abelii (Sumatran orangutan).